A 222-amino-acid chain; its full sequence is Peroxiredoxin (222 aa).

The 156-residue stretch at 2–157 (VVLGQKFPEV…ILRLVEALQT (156 aa)) folds into the Thioredoxin domain. Cysteine 44 acts as the Cysteine sulfenic acid (-SOH) intermediate in catalysis. Arginine 120 lines the substrate pocket. A disulfide bridge connects residues cysteine 211 and cysteine 217.

The protein belongs to the peroxiredoxin family. Prx6 subfamily. Homodecamer. Pentamer of dimers that assemble into a ring structure.

It localises to the cytoplasm. It catalyses the reaction a hydroperoxide + [thioredoxin]-dithiol = an alcohol + [thioredoxin]-disulfide + H2O. Its function is as follows. Thiol-specific peroxidase that catalyzes the reduction of hydrogen peroxide and organic hydroperoxides to water and alcohols, respectively. Plays a role in cell protection against oxidative stress by detoxifying peroxides. The chain is Peroxiredoxin from Nanoarchaeum equitans (strain Kin4-M).